The chain runs to 193 residues: Xanthine phosphoribosyltransferase (193 aa).

Residues Leu-20 and Asn-27 each coordinate xanthine. 129–133 (ANGKA) contacts 5-phospho-alpha-D-ribose 1-diphosphate. Lys-157 lines the xanthine pocket.

Belongs to the purine/pyrimidine phosphoribosyltransferase family. Xpt subfamily. Homodimer.

Its subcellular location is the cytoplasm. It catalyses the reaction XMP + diphosphate = xanthine + 5-phospho-alpha-D-ribose 1-diphosphate. The protein operates within purine metabolism; XMP biosynthesis via salvage pathway; XMP from xanthine: step 1/1. Converts the preformed base xanthine, a product of nucleic acid breakdown, to xanthosine 5'-monophosphate (XMP), so it can be reused for RNA or DNA synthesis. The polypeptide is Xanthine phosphoribosyltransferase (Bifidobacterium longum (strain NCC 2705)).